Reading from the N-terminus, the 406-residue chain is Eukaryotic initiation factor 4A-I (406 aa).

A disordered region spans residues 1-21 (MSASQDSRSRDNGPDGMEPEG). S2 bears the N-acetylserine mark. S4 is subject to Phosphoserine. The Q motif motif lies at 32–60 (DSFDDMNLSESLLRGIYAYGFEKPSAIQQ). Residues 63 to 234 (ILPCIKGYDV…KKFMRDPIRI (172 aa)) enclose the Helicase ATP-binding domain. 76 to 83 (AQSGTGKT) serves as a coordination point for ATP. K118 carries the N6-acetyllysine modification. K146 participates in a covalent cross-link: Glycyl lysine isopeptide (Lys-Gly) (interchain with G-Cter in SUMO2). Position 158 is a phosphothreonine (T158). N6-acetyllysine is present on K174. The DEAD box motif lies at 182 to 185 (DEAD). An N6-acetyllysine modification is found at K193. Residue K225 forms a Glycyl lysine isopeptide (Lys-Gly) (interchain with G-Cter in SUMO2) linkage. Residue K238 is modified to N6-acetyllysine; alternate. K238 is covalently cross-linked (Glycyl lysine isopeptide (Lys-Gly) (interchain with G-Cter in SUMO2); alternate). The Helicase C-terminal domain occupies 245–406 (GIRQFYINVE…EMPLNVADLI (162 aa)). Glycyl lysine isopeptide (Lys-Gly) (interchain with G-Cter in SUMO2) cross-links involve residues K309, K369, and K381.

It belongs to the DEAD box helicase family. eIF4A subfamily. In terms of assembly, eIF4F is a multi-subunit complex, the composition of which varies with external and internal environmental conditions. It is composed of at least EIF4A, EIF4E and EIF4G1/EIF4G3. Interacts with PAIP1, EIF4E and UPF2. Found in a complex with XPO7, EIF4A1, ARHGAP1, VPS26A, VPS29, VPS35 and SFN. May interact with NOM1. Interacts with PDCD4; this interferes with the interaction between EIF4A and EIF4G. Interacts with RBM4. Interacts with DDX3X in an RNA-independent manner. Interacts with PKP1 (via N-terminus); the interaction promotes EIF4A1 recruitment to the cap-dependent translation complex and EIF4A1 ATPase activity.

Its subcellular location is the cytoplasm. The protein resides in the perinuclear region. The protein localises to the cell membrane. It is found in the stress granule. It catalyses the reaction ATP + H2O = ADP + phosphate + H(+). ATP-dependent RNA helicase which is a subunit of the eIF4F complex involved in cap recognition and is required for mRNA binding to ribosome. In the current model of translation initiation, eIF4A unwinds RNA secondary structures in the 5'-UTR of mRNAs which is necessary to allow efficient binding of the small ribosomal subunit, and subsequent scanning for the initiator codon. As a result, promotes cell proliferation and growth. This Bos taurus (Bovine) protein is Eukaryotic initiation factor 4A-I (EIF4A1).